The sequence spans 1499 residues: Ubiquitinating/deubiquitinating enzyme SdeA (1499 aa).

Residues 1–193 (MPKYVEGVEL…GKALRENTEK (193 aa)) are deubiquitinase. Active-site for deubiquitinase activity residues include histidine 64 and aspartate 80. Cysteine 118 (nucleophile; for deubiquitinase activity) is an active-site residue. Residues 760–1000 (PPTRLFRGLN…KALAAFPSDT (241 aa)) form a mono-ADP-ribosyltransferase region. 766 to 772 (RGLNLSE) is a binding site for NAD(+). Glutamate 860 is subject to 5-glutamyl glutamate. Glutamate 862 serves as a coordination point for NAD(+). A coiled-coil region spans residues 1059–1181 (KEMGTIRREL…IDTKLADAYL (123 aa)).

Belongs to the SidE family. As to quaternary structure, interacts with IcmS. Is able to ubiquitinate itself, but this modification is not required to ubiquitinate Rab33b. In terms of processing, glutamylated at Glu-860 by SidJ; glutamylation inhibits SdeA activity to catalyze the production of ADP-ribosylated ubiquitin.

It localises to the secreted. Its subcellular location is the host cell. The enzyme catalyses L-arginyl-[protein] + NAD(+) = N(omega)-(ADP-D-ribosyl)-L-arginyl-[protein] + nicotinamide + H(+). Ubiquitination catalyzed by SdeA is insensitive to the cysteine alkylation agent maleimide, suggesting that a cysteine conjugation of ubiquitin does not form during the reaction. In terms of biological role, secreted effector that interferes with the host cell ubiquitin pathway and is required for intracellular bacterial replication. Catalyzes the ubiquitination of several mammalian Rab proteins (Rab33b, Rab1, Rab6a and Rab30) during L.pneumophila infection, without engaging the standard cellular enzyme cascade (E1 and E2). Transfers an ADP-ribose moiety from NAD to the 'Arg-42' residue of ubiquitin in a reaction that releases nicotinamide. The modified ubiquitin is subsequently transferred to serine residues of the substrate protein via a phosphoribose linker that results in the release of AMP. Cannot ubiquitinate the endosomal Rab5 or the cytoskeletal small GTPase Rac1. Also acts as a deubiquitinase (DUB), catalyzing the cleavage of three of the most abundant polyubiquitin chains ('Lys-11', 'Lys-48' and 'Lys-63') with a distinct preference for 'Lys-63' linkages; is thus able to efficiently remove 'Lys-63'-linked polyubiquitin chains from the phagosomal surface. Is also able to remove NEDD8 from neddylated proteins, but is unable to recognize SUMO. The DUB activity of SdeA is important for regulating the dynamics of ubiquitin association with the bacterial phagosome, but is dispensable for its role in intracellular bacterial replication. The protein is Ubiquitinating/deubiquitinating enzyme SdeA of Legionella pneumophila subsp. pneumophila (strain Philadelphia 1 / ATCC 33152 / DSM 7513).